We begin with the raw amino-acid sequence, 107 residues long: MCYYLYYRGVSLVLIVTFLSSFIFIVWLPVALVSWFEFGLSSLSSVDDSSLAVLSLPAVFSSAASPDSCLVSLIEVKGEAFICVLELTFVLELTLGEDVLEGGCLLI.

The helical transmembrane segment at 13–33 (VLIVTFLSSFIFIVWLPVALV) threads the bilayer.

It is found in the membrane. This is an uncharacterized protein from Saccharomyces cerevisiae (strain ATCC 204508 / S288c) (Baker's yeast).